The primary structure comprises 228 residues: Large ribosomal subunit protein uL1 (228 aa).

This sequence belongs to the universal ribosomal protein uL1 family. In terms of assembly, part of the 50S ribosomal subunit.

Its function is as follows. Binds directly to 23S rRNA. The L1 stalk is quite mobile in the ribosome, and is involved in E site tRNA release. Protein L1 is also a translational repressor protein, it controls the translation of the L11 operon by binding to its mRNA. The sequence is that of Large ribosomal subunit protein uL1 from Clavibacter michiganensis subsp. michiganensis (strain NCPPB 382).